The following is a 216-amino-acid chain: Imidazole glycerol phosphate synthase subunit HisH (216 aa).

A Glutamine amidotransferase type-1 domain is found at 2 to 216; sequence RVAIIDYGSG…LIANFLKWKP (215 aa). Cys88 functions as the Nucleophile in the catalytic mechanism. Catalysis depends on residues His196 and Glu198.

As to quaternary structure, heterodimer of HisH and HisF.

The protein localises to the cytoplasm. The enzyme catalyses 5-[(5-phospho-1-deoxy-D-ribulos-1-ylimino)methylamino]-1-(5-phospho-beta-D-ribosyl)imidazole-4-carboxamide + L-glutamine = D-erythro-1-(imidazol-4-yl)glycerol 3-phosphate + 5-amino-1-(5-phospho-beta-D-ribosyl)imidazole-4-carboxamide + L-glutamate + H(+). It catalyses the reaction L-glutamine + H2O = L-glutamate + NH4(+). The protein operates within amino-acid biosynthesis; L-histidine biosynthesis; L-histidine from 5-phospho-alpha-D-ribose 1-diphosphate: step 5/9. Its function is as follows. IGPS catalyzes the conversion of PRFAR and glutamine to IGP, AICAR and glutamate. The HisH subunit catalyzes the hydrolysis of glutamine to glutamate and ammonia as part of the synthesis of IGP and AICAR. The resulting ammonia molecule is channeled to the active site of HisF. This is Imidazole glycerol phosphate synthase subunit HisH from Brucella abortus biovar 1 (strain 9-941).